Reading from the N-terminus, the 241-residue chain is 1-(5-phosphoribosyl)-5-[(5-phosphoribosylamino)methylideneamino] imidazole-4-carboxamide isomerase (241 aa).

Asp-8 (proton acceptor) is an active-site residue. The Proton donor role is filled by Asp-130.

The protein belongs to the HisA/HisF family.

It localises to the cytoplasm. It catalyses the reaction 1-(5-phospho-beta-D-ribosyl)-5-[(5-phospho-beta-D-ribosylamino)methylideneamino]imidazole-4-carboxamide = 5-[(5-phospho-1-deoxy-D-ribulos-1-ylimino)methylamino]-1-(5-phospho-beta-D-ribosyl)imidazole-4-carboxamide. The protein operates within amino-acid biosynthesis; L-histidine biosynthesis; L-histidine from 5-phospho-alpha-D-ribose 1-diphosphate: step 4/9. The chain is 1-(5-phosphoribosyl)-5-[(5-phosphoribosylamino)methylideneamino] imidazole-4-carboxamide isomerase from Leptospira borgpetersenii serovar Hardjo-bovis (strain JB197).